Reading from the N-terminus, the 388-residue chain is Mycinamicin VIII C21 methyl hydroxylase (388 aa).

Heme-binding residues include H87, R91, R279, H335, and C337.

Belongs to the cytochrome P450 family. It depends on heme as a cofactor.

The protein operates within antibiotic biosynthesis; mycinamicin biosynthesis. Functionally, involved in the biosynthesis of mycinamicin, a 16-membered macrolide antibiotic. Catalyzes hydroxylation at the C21 methyl group of mycinamicin VIII, the earliest macrolide form in the postpolyketide synthase tailoring pathway, leading to mycinamicin VII. Uses ferredoxin MycCII in electron transfer for catalysis. This chain is Mycinamicin VIII C21 methyl hydroxylase, found in Micromonospora griseorubida.